The following is a 99-amino-acid chain: Large ribosomal subunit protein eL21 (99 aa).

A compositionally biased stretch (polar residues) spans 1–14; that stretch reads MPNSNGPLSNSGGK. The disordered stretch occupies residues 1–38; the sequence is MPNSNGPLSNSGGKLQNDPRDRGTSPPQRAIADYDDGE.

Belongs to the eukaryotic ribosomal protein eL21 family.

The sequence is that of Large ribosomal subunit protein eL21 from Halobacterium salinarum (strain ATCC 29341 / DSM 671 / R1).